We begin with the raw amino-acid sequence, 91 residues long: Probable Fe(2+)-trafficking protein (91 aa).

The protein belongs to the Fe(2+)-trafficking protein family. As to quaternary structure, monomer.

Could be a mediator in iron transactions between iron acquisition and iron-requiring processes, such as synthesis and/or repair of Fe-S clusters in biosynthetic enzymes. The chain is Probable Fe(2+)-trafficking protein from Klebsiella pneumoniae subsp. pneumoniae (strain ATCC 700721 / MGH 78578).